Reading from the N-terminus, the 233-residue chain is tRNA (guanine-N(1)-)-methyltransferase (233 aa).

Residues Gly-113 and 133–138 (IGDYVL) contribute to the S-adenosyl-L-methionine site.

The protein belongs to the RNA methyltransferase TrmD family. In terms of assembly, homodimer.

It is found in the cytoplasm. The enzyme catalyses guanosine(37) in tRNA + S-adenosyl-L-methionine = N(1)-methylguanosine(37) in tRNA + S-adenosyl-L-homocysteine + H(+). Functionally, specifically methylates guanosine-37 in various tRNAs. The protein is tRNA (guanine-N(1)-)-methyltransferase of Ruminiclostridium cellulolyticum (strain ATCC 35319 / DSM 5812 / JCM 6584 / H10) (Clostridium cellulolyticum).